Reading from the N-terminus, the 425-residue chain is Secernin-2 (425 aa).

Residue cysteine 12 is part of the active site. Phosphothreonine is present on threonine 52.

This sequence belongs to the peptidase C69 family. Secernin subfamily.

The chain is Secernin-2 (SCRN2) from Homo sapiens (Human).